Here is a 568-residue protein sequence, read N- to C-terminus: Malate synthase, glyoxysomal (568 aa).

Residues 1–20 (MGSLGMYSESGLTKKGSSRG) form a disordered region. Arg183 functions as the Proton acceptor in the catalytic mechanism. Asp469 (proton donor) is an active-site residue. The short motif at 566–568 (SKL) is the Microbody targeting signal element.

Belongs to the malate synthase family.

The protein resides in the glyoxysome. It carries out the reaction glyoxylate + acetyl-CoA + H2O = (S)-malate + CoA + H(+). Its pathway is carbohydrate metabolism; glyoxylate cycle; (S)-malate from isocitrate: step 2/2. The polypeptide is Malate synthase, glyoxysomal (Cucumis sativus (Cucumber)).